We begin with the raw amino-acid sequence, 529 residues long: Bifunctional purine biosynthesis protein PurH (529 aa).

Residues Met1–Val148 enclose the MGS-like domain.

The protein belongs to the PurH family.

It catalyses the reaction (6R)-10-formyltetrahydrofolate + 5-amino-1-(5-phospho-beta-D-ribosyl)imidazole-4-carboxamide = 5-formamido-1-(5-phospho-D-ribosyl)imidazole-4-carboxamide + (6S)-5,6,7,8-tetrahydrofolate. It carries out the reaction IMP + H2O = 5-formamido-1-(5-phospho-D-ribosyl)imidazole-4-carboxamide. It functions in the pathway purine metabolism; IMP biosynthesis via de novo pathway; 5-formamido-1-(5-phospho-D-ribosyl)imidazole-4-carboxamide from 5-amino-1-(5-phospho-D-ribosyl)imidazole-4-carboxamide (10-formyl THF route): step 1/1. The protein operates within purine metabolism; IMP biosynthesis via de novo pathway; IMP from 5-formamido-1-(5-phospho-D-ribosyl)imidazole-4-carboxamide: step 1/1. This Yersinia pseudotuberculosis serotype O:1b (strain IP 31758) protein is Bifunctional purine biosynthesis protein PurH.